The following is a 100-amino-acid chain: Noncompact myelin-associated protein (100 aa).

The Extracellular segment spans residues 1–28 (MTTATTLGDAVFSLNMTRGEDALYKSSG). A helical transmembrane segment spans residues 29–49 (AIVAAIVVVVIIIVTLVLILL). Over 50 to 100 (KMYNRRMRTRRELEPKSPKPPVPPALDPSSNGSQQPATVTFDPANVHVETR) the chain is Cytoplasmic. The interval 58 to 100 (TRRELEPKSPKPPVPPALDPSSNGSQQPATVTFDPANVHVETR) is disordered.

Post-translationally, glycosylated. In terms of tissue distribution, found in the peripheral nervous system (PNS) Schwann cells (at protein level). Expressed in the PNS, primarily limited to Schwann cells.

Its subcellular location is the cell membrane. Its function is as follows. Plays a role in myelin formation. This Mus musculus (Mouse) protein is Noncompact myelin-associated protein (Ncmap).